The primary structure comprises 172 residues: uncharacterized protein (172 aa).

The next 3 membrane-spanning stretches (helical) occupy residues 16–36 (IMIV…AYLI), 68–88 (SFLI…AGEL), and 89–109 (VISH…YIII).

Its subcellular location is the cell membrane. This is an uncharacterized protein from Methanocaldococcus jannaschii (strain ATCC 43067 / DSM 2661 / JAL-1 / JCM 10045 / NBRC 100440) (Methanococcus jannaschii).